The chain runs to 388 residues: Transcription factor TB1 (388 aa).

A TCP domain is found at 115–173 (RKDRHSKISTAGGMRDRRMRLSLDVARKFFALQDMLGFDKASKTVQWLLNMSKAAIREI). 2 disordered regions span residues 180–269 (SVCE…EKNR) and 289–331 (AAGE…VGVS). Residues 187–201 (SSSLSVDGKQQQHSN) show a composition bias toward polar residues. Composition is skewed to basic and acidic residues over residues 210-224 (GDHK…DGKK) and 247-269 (VPDK…EKNR). Residues 250–267 (KESRAKARERARERTKEK) form the R domain. A compositionally biased stretch (low complexity) spans 289–314 (AAGEDKSPTSPSNNLNHSSSTNLVST).

As to quaternary structure, interacts with MADS57. Expressed in the axillary bud of the first formed leaf node. Expressed in axillary buds, shoot apical meristem, young leaves, vascular tissues and the tips of crown roots.

Its subcellular location is the nucleus. Probable transcription factor that functions as a negative regulator of lateral branching, presumably through its expression in axillary buds. Involved in the fine tuning of shoot branching. May function as an integrator of multiple signaling pathways to regulate the development of axillary buds. Works partially downstream of strigolactones to inhibit bud outgrowth. Binds to MADS57 to suppress the negative regulation of D14 by MADS57 and balance the expression of D14 for tillering. The protein is Transcription factor TB1 of Oryza sativa subsp. japonica (Rice).